The primary structure comprises 1040 residues: Multidrug resistance protein MdtB (1040 aa).

The next 12 membrane-spanning stretches (helical) occupy residues 16–36 (FIMR…AGII), 347–367 (LMMA…NIPA), 369–389 (IIPG…MVFL), 396–416 (LTLM…IVVI), 440–460 (IGFT…PLLF), 472–492 (FAIT…TLTP), 537–557 (WLTL…WVFI), 863–883 (LGST…VLGI), 888–908 (FIHP…ALLA), 911–931 (IAGS…IGIV), 968–988 (ILMT…STGV), and 998–1018 (IGMV…TPVI).

The protein belongs to the resistance-nodulation-cell division (RND) (TC 2.A.6) family. MdtB subfamily. Part of a tripartite efflux system composed of MdtA, MdtB and MdtC. MdtB forms a heteromultimer with MdtC.

Its subcellular location is the cell inner membrane. The MdtABC tripartite complex confers resistance against novobiocin and deoxycholate. The sequence is that of Multidrug resistance protein MdtB from Escherichia coli O8 (strain IAI1).